The following is a 623-amino-acid chain: UvrABC system protein C (623 aa).

Residues 12-91 (FSPGVYLYKD…IKQYKPRFNI (80 aa)) enclose the GIY-YIG domain. The 36-residue stretch at 201–236 (SDLARGLRARMEAASLEMRFEEAAGLRDLITTVEEI) folds into the UVR domain. Residues 604–623 (PVASVAQSEDAAPDVPDPQA) form a disordered region.

Belongs to the UvrC family. As to quaternary structure, interacts with UvrB in an incision complex.

The protein resides in the cytoplasm. Functionally, the UvrABC repair system catalyzes the recognition and processing of DNA lesions. UvrC both incises the 5' and 3' sides of the lesion. The N-terminal half is responsible for the 3' incision and the C-terminal half is responsible for the 5' incision. This chain is UvrABC system protein C, found in Solibacter usitatus (strain Ellin6076).